The following is a 1395-amino-acid chain: G2/mitotic-specific cyclin-B3 (1395 aa).

The interval 1–59 (MLLPLPPQSSKPVPKKSQSSKIVPSHHDPSEKTGENCQTKISPSSLQESPSSLQGALKK) is disordered. Low complexity predominate over residues 10-23 (SKPVPKKSQSSKIV). Over residues 25–34 (SHHDPSEKTG) the composition is skewed to basic and acidic residues. The segment covering 42 to 54 (SPSSLQESPSSLQ) has biased composition (low complexity). The D-box signature appears at 60–68 (RSAFEDLTN). Disordered regions lie at residues 418-464 (LSIK…PTEE) and 1074-1122 (ATMT…DSSD). A compositionally biased stretch (basic and acidic residues) spans 419-431 (SIKEKPSTEKESF). Residues 1082 to 1093 (SRTTTESSACES) are compositionally biased toward low complexity.

Belongs to the cyclin family. Cyclin AB subfamily. Interacts with CDK2 kinase. In terms of processing, ubiquitinated. Ubiquitination leads to its degradation during anaphase entry, after degradation of CCNB1. Testis specific. In testis, it is expressed in developing germ cells, but not in Leydig cells. Weakly or not expressed in other tissues.

It is found in the nucleus. Its function is as follows. Cyclins are positive regulatory subunits of the cyclin-dependent kinases (CDKs), and thereby play an essential role in the control of the cell cycle, notably via their destruction during cell division. Its tissue specificity suggest that it may be required during early meiotic prophase I. The chain is G2/mitotic-specific cyclin-B3 (CCNB3) from Homo sapiens (Human).